A 647-amino-acid polypeptide reads, in one-letter code: S-adenosyl-L-methionine-dependent tRNA 4-demethylwyosine synthase (647 aa).

The Flavodoxin-like domain maps to Gly-50–Ile-198. Residues Ser-56 to Thr-60 and Val-142 to Ile-174 contribute to the FMN site. Residues Tyr-316–Glu-559 enclose the Radical SAM core domain. Residues Cys-332, Cys-336, and Cys-339 each contribute to the [4Fe-4S] cluster site.

It belongs to the TYW1 family. The cofactor is [4Fe-4S] cluster.

It carries out the reaction N(1)-methylguanosine(37) in tRNA(Phe) + pyruvate + S-adenosyl-L-methionine = 4-demethylwyosine(37) in tRNA(Phe) + 5'-deoxyadenosine + L-methionine + CO2 + H2O. It participates in tRNA modification; wybutosine-tRNA(Phe) biosynthesis. Its function is as follows. Probable component of the wybutosine biosynthesis pathway. Wybutosine is a hyper modified guanosine with a tricyclic base found at the 3'-position adjacent to the anticodon of eukaryotic phenylalanine tRNA. Catalyzes the condensation of N-methylguanine with 2 carbon atoms from pyruvate to form the tricyclic 4-demethylwyosine, an intermediate in wybutosine biosynthesis. The polypeptide is S-adenosyl-L-methionine-dependent tRNA 4-demethylwyosine synthase (TYW1) (Arabidopsis thaliana (Mouse-ear cress)).